The chain runs to 192 residues: MLSFLSSNLSSTRQSMAQVLNFALVLSTAFMLWKGLSVFTASSSPIVVVLSGSMEPAFQRGDLLFLWNRSPRAELGEIVVYNVRGKDIPIVHRVVRTFPQIEGKAKKVKEVNEASSVPPNMLLTKGDNNIADDTELYAKNQDFLHREEDIVGSVRGYMPMVGYVTIMLSEHPWLKTVLLGIMGLMVILQREQ.

At 1 to 18 (MLSFLSSNLSSTRQSMAQ) the chain is on the cytoplasmic side. A helical; Signal-anchor for type II membrane protein transmembrane segment spans residues 19 to 39 (VLNFALVLSTAFMLWKGLSVF). Over 40–192 (TASSSPIVVV…GLMVILQREQ (153 aa)) the chain is Lumenal. Active-site charge relay system residues include S53, H92, and D133. Positions 177 to 188 (VLLGIMGLMVIL) are C-terminal short (CTS) helix.

The protein belongs to the peptidase S26B family. As to quaternary structure, component of the signal peptidase complex (SPC) composed of a catalytic subunit SEC11 and three accessory subunits SPC1, SPC2 and SPC3. The complex induces a local thinning of the ER membrane which is used to measure the length of the signal peptide (SP) h-region of protein substrates. This ensures the selectivity of the complex towards h-regions shorter than 18-20 amino acids. SPC associates with the translocon complex.

Its subcellular location is the endoplasmic reticulum membrane. It catalyses the reaction Cleavage of hydrophobic, N-terminal signal or leader sequences from secreted and periplasmic proteins.. Functionally, catalytic component of the signal peptidase complex (SPC) which catalyzes the cleavage of N-terminal signal sequences from nascent proteins as they are translocated into the lumen of the endoplasmic reticulum. Specifically cleaves N-terminal signal peptides that contain a hydrophobic alpha-helix (h-region) shorter than 18-20 amino acids. This chain is Signal peptidase complex catalytic subunit sec11 (sec11), found in Aspergillus fumigatus (strain CBS 144.89 / FGSC A1163 / CEA10) (Neosartorya fumigata).